Here is a 249-residue protein sequence, read N- to C-terminus: Probable transcriptional regulatory protein OTBS_0251 (249 aa).

This sequence belongs to the TACO1 family.

It localises to the cytoplasm. The sequence is that of Probable transcriptional regulatory protein OTBS_0251 from Orientia tsutsugamushi (strain Boryong) (Rickettsia tsutsugamushi).